Consider the following 197-residue polypeptide: MSYYAFEGLIPVVHPEAYVHPSAVLIGDVIVGAGVYIGPLASLRGDYGRLILEAGANLQDGCIMHGYCDTDTIVHENGHIGHGAILHGCVIGRDALVGMNSVIMDGAIIGEESIVAAMSFVKAGFVGAPRQLLVGAPARVKRDVTDEELHWKRLNTQEYQDLAVRCRASLCETQPLTQVEKNRPRLKGTTEVKPKSA.

The protein belongs to the transferase hexapeptide repeat family.

The protein operates within amine and polyamine metabolism; carnitine metabolism. Overproduction of CaiE stimulates the activity of CaiB and CaiD. The chain is Carnitine operon protein CaiE from Citrobacter koseri (strain ATCC BAA-895 / CDC 4225-83 / SGSC4696).